A 183-amino-acid polypeptide reads, in one-letter code: MDIDPYKEFGATVELLSFLPSDFFPSVRDLLDTASALYREALESPEHCSPHHTALRQAILCWGELMTLATWVGVNLEDPASRDLVVSYVNTNMGLKFRQLLWFHISCLTFGRETVIEYLVSFGVWIRTPPAYRPPNAPILSTLPETTVVRRRGRSPRRRTPSPRRRRSQSPRRRRSQSRESQC.

Positions 136 to 183 are disordered; sequence NAPILSTLPETTVVRRRGRSPRRRTPSPRRRRSQSPRRRRSQSRESQC. The segment covering 149 to 176 has biased composition (basic residues); that stretch reads VRRRGRSPRRRTPSPRRRRSQSPRRRRS. A phosphoserine; by host mark is found at serine 155, serine 162, and serine 170. A 1; half-length repeat occupies 155-161; it reads SPRRRTP. The 3 X 8 AA repeats of S-P-R-R-R-[PR]-S-Q stretch occupies residues 155-177; the sequence is SPRRRTPSPRRRRSQSPRRRRSQ. Residues 158-175 carry the Bipartite nuclear localization signal motif; the sequence is RRTPSPRRRRSQSPRRRR. 2 repeat units span residues 162-169 and 170-177. The tract at residues 177-183 is RNA binding; it reads QSRESQC.

This sequence belongs to the orthohepadnavirus core antigen family. As to quaternary structure, homodimerizes, then multimerizes. Interacts with cytosol exposed regions of viral L glycoprotein present in the reticulum-to-Golgi compartment. Interacts with human FLNB. Phosphorylated form interacts with host importin alpha; this interaction depends on the exposure of the NLS, which itself depends upon genome maturation and/or phosphorylation of the capsid protein. Interacts with host NUP153. Post-translationally, phosphorylated by host SRPK1, SRPK2, and maybe protein kinase C or GAPDH. Phosphorylation is critical for pregenomic RNA packaging. Protein kinase C phosphorylation is stimulated by HBx protein and may play a role in transport of the viral genome to the nucleus at the late step during the viral replication cycle.

The protein resides in the virion. The protein localises to the host cytoplasm. Functionally, self assembles to form an icosahedral capsid. Most capsids appear to be large particles with an icosahedral symmetry of T=4 and consist of 240 copies of capsid protein, though a fraction forms smaller T=3 particles consisting of 180 capsid proteins. Entering capsids are transported along microtubules to the nucleus. Phosphorylation of the capsid is thought to induce exposure of nuclear localization signal in the C-terminal portion of the capsid protein that allows binding to the nuclear pore complex via the importin (karyopherin-) alpha and beta. Capsids are imported in intact form through the nuclear pore into the nuclear basket, where it probably binds NUP153. Only capsids that contain the mature viral genome can release the viral DNA and capsid protein into the nucleoplasm. Immature capsids get stuck in the basket. Capsids encapsulate the pre-genomic RNA and the P protein. Pre-genomic RNA is reverse-transcribed into DNA while the capsid is still in the cytoplasm. The capsid can then either be directed to the nucleus, providing more genomes for transcription, or bud through the endoplasmic reticulum to provide new virions. This is Capsid protein from Hepatitis B virus genotype D subtype ayw (isolate France/Tiollais/1979) (HBV-D).